Consider the following 343-residue polypeptide: MYNLARQLLFKLSPETSHDLSLDLIGAGGRLGLNGLLSKSPAKLPVSVMGLEFPNPVGLAAGLDKNGAAIDGFAQLGFGFVEIGTVTPRPQPGNPKPRIFRLPHAEAIINRMGFNNLGVDNLVSRVQAAKYRGILGINIGKNFDTPVERAVDDYLICLDKVYAHASYVTVNVSSPNTPGLRSLQFGDSLKQLLQALSLRQQELTQRHGRRVPLAIKIAPDMSDEETVLVASALIESGMDAVIATNTTLSRQGVEGLPHGDEAGGLSGAPVREKSTHIVKVLAGELAGRLPIIAAGGITEGRHAAEKIAAGASLVQIYSGFIYKGPALIRESVDAIAAMPPAVR.

Residues 61–65 (AGLDK) and Thr85 each bind FMN. Substrate is bound at residue Lys65. 110–114 (NRMGF) contributes to the substrate binding site. FMN is bound by residues Asn138 and Asn171. Asn171 contributes to the substrate binding site. Ser174 acts as the Nucleophile in catalysis. Residue Asn176 coordinates substrate. Positions 216 and 244 each coordinate FMN. Position 245 to 246 (245 to 246 (NT)) interacts with substrate. Residues Gly267, Gly296, and 317–318 (YS) contribute to the FMN site.

Belongs to the dihydroorotate dehydrogenase family. Type 2 subfamily. Monomer. FMN serves as cofactor.

The protein resides in the cell membrane. The enzyme catalyses (S)-dihydroorotate + a quinone = orotate + a quinol. The protein operates within pyrimidine metabolism; UMP biosynthesis via de novo pathway; orotate from (S)-dihydroorotate (quinone route): step 1/1. Its function is as follows. Catalyzes the conversion of dihydroorotate to orotate with quinone as electron acceptor. The protein is Dihydroorotate dehydrogenase (quinone) of Pseudomonas savastanoi pv. phaseolicola (strain 1448A / Race 6) (Pseudomonas syringae pv. phaseolicola (strain 1448A / Race 6)).